Consider the following 180-residue polypeptide: MSREVIFTEKEIKERVSELGRQITQDYKDSKNLVLVGILKGSFVFMSDLVRSIHLPNTNVSLEFMSISSYGAETSSSGVIRIMMDLRTSIEGKDVLIIEDIVDSGLTLKHLMELLNHRNPNSLHTAVLLRKKEGLKVEVPVKYMGFDIPMVFIIGYGLDFAENYRELPYLGELKEECYKK.

Residues Lys-40, 99 to 107 (EDIVDSGLT), Lys-131, and Asp-159 contribute to the GMP site. Asp-103 (proton acceptor) is an active-site residue. Position 159 (Asp-159) interacts with Mg(2+).

The protein belongs to the purine/pyrimidine phosphoribosyltransferase family. Requires Mg(2+) as cofactor.

The protein localises to the cytoplasm. The catalysed reaction is IMP + diphosphate = hypoxanthine + 5-phospho-alpha-D-ribose 1-diphosphate. It catalyses the reaction GMP + diphosphate = guanine + 5-phospho-alpha-D-ribose 1-diphosphate. The protein operates within purine metabolism; IMP biosynthesis via salvage pathway; IMP from hypoxanthine: step 1/1. In terms of biological role, converts guanine to guanosine monophosphate, and hypoxanthine to inosine monophosphate. Transfers the 5-phosphoribosyl group from 5-phosphoribosylpyrophosphate onto the purine. Plays a central role in the generation of purine nucleotides through the purine salvage pathway. This Dictyostelium discoideum (Social amoeba) protein is Hypoxanthine-guanine phosphoribosyltransferase (hprT).